A 262-amino-acid chain; its full sequence is Nickel import ATP-binding protein NikD (262 aa).

One can recognise an ABC transporter domain in the interval Leu-6 to Val-249. Gly-42 to Ser-49 is an ATP binding site.

This sequence belongs to the ABC transporter superfamily. Nickel importer (TC 3.A.1.5.3) family. In terms of assembly, the complex is composed of two ATP-binding proteins (NikD and NikE), two transmembrane proteins (NikB and NikC) and a solute-binding protein (NikA).

It localises to the cell inner membrane. The enzyme catalyses Ni(2+)(out) + ATP + H2O = Ni(2+)(in) + ADP + phosphate + H(+). In terms of biological role, part of the ABC transporter complex NikABCDE involved in nickel import. Responsible for energy coupling to the transport system. This chain is Nickel import ATP-binding protein NikD, found in Brucella abortus biovar 1 (strain 9-941).